The primary structure comprises 155 residues: Ribosomal RNA large subunit methyltransferase H (155 aa).

Residues Leu-72, Gly-103, and 122 to 127 (LSPLTL) each bind S-adenosyl-L-methionine.

The protein belongs to the RNA methyltransferase RlmH family. As to quaternary structure, homodimer.

It localises to the cytoplasm. It carries out the reaction pseudouridine(1915) in 23S rRNA + S-adenosyl-L-methionine = N(3)-methylpseudouridine(1915) in 23S rRNA + S-adenosyl-L-homocysteine + H(+). Specifically methylates the pseudouridine at position 1915 (m3Psi1915) in 23S rRNA. The chain is Ribosomal RNA large subunit methyltransferase H from Actinobacillus pleuropneumoniae serotype 5b (strain L20).